We begin with the raw amino-acid sequence, 216 residues long: Redox-sensing transcriptional repressor Rex (216 aa).

Positions 20–59 (QYYRLFKSLVEENVTRTNSQLISEKIGVDAATIRRDFSLF) form a DNA-binding region, H-T-H motif. NAD(+) is bound at residue 94-99 (GVGNLG).

This sequence belongs to the transcriptional regulatory Rex family. As to quaternary structure, homodimer.

It localises to the cytoplasm. In terms of biological role, modulates transcription in response to changes in cellular NADH/NAD(+) redox state. This is Redox-sensing transcriptional repressor Rex from Lactococcus lactis subsp. cremoris (Streptococcus cremoris).